The following is a 429-amino-acid chain: Probable M18 family aminopeptidase 2 (429 aa).

Zn(2+) is bound by residues His82, His156, and His401.

It belongs to the peptidase M18 family. Requires Zn(2+) as cofactor.

The protein is Probable M18 family aminopeptidase 2 of Pseudomonas putida (strain GB-1).